We begin with the raw amino-acid sequence, 379 residues long: Cytochrome b (379 aa).

Helical transmembrane passes span 32 to 52 (YGSL…VLAT), 76 to 98 (WLLR…LHIG), 111 to 131 (VWNI…LGYV), and 177 to 197 (FFAL…LHIF). Residues His-82 and His-96 each contribute to the heme b site. The heme b site is built by His-181 and His-195. A ubiquinone is bound at residue His-200. A run of 4 helical transmembrane segments spans residues 223-243 (YSVK…VFTL), 287-304 (LGGV…FLFS), 320-340 (LARL…WLGS), and 348-367 (NEVA…TMCA).

The protein belongs to the cytochrome b family. In terms of assembly, the main subunits of complex b-c1 are: cytochrome b, cytochrome c1 and the Rieske protein. Requires heme b as cofactor.

The protein resides in the mitochondrion inner membrane. Functionally, component of the ubiquinol-cytochrome c reductase complex (complex III or cytochrome b-c1 complex) that is part of the mitochondrial respiratory chain. The b-c1 complex mediates electron transfer from ubiquinol to cytochrome c. Contributes to the generation of a proton gradient across the mitochondrial membrane that is then used for ATP synthesis. This chain is Cytochrome b (mt:Cyt-b), found in Brachionus plicatilis (Marine rotifer).